Here is a 199-residue protein sequence, read N- to C-terminus: N-(5'-phosphoribosyl)anthranilate isomerase (199 aa).

The protein belongs to the TrpF family.

The enzyme catalyses N-(5-phospho-beta-D-ribosyl)anthranilate = 1-(2-carboxyphenylamino)-1-deoxy-D-ribulose 5-phosphate. The protein operates within amino-acid biosynthesis; L-tryptophan biosynthesis; L-tryptophan from chorismate: step 3/5. The sequence is that of N-(5'-phosphoribosyl)anthranilate isomerase from Streptococcus pneumoniae (strain ATCC BAA-255 / R6).